The primary structure comprises 36 residues: Delta-amaurobitoxin-Pl1c (36 aa).

4 cysteine pairs are disulfide-bonded: Cys-3–Cys-19, Cys-10–Cys-24, Cys-18–Cys-34, and Cys-26–Cys-32.

In terms of tissue distribution, expressed by the venom gland.

It is found in the secreted. Binds at site 4 of sodium channels (Nav) and inhibits the fast inactivation of cockroach channels. This toxin is active only on insects. Has a potent activity against S.litura larvae. In Pireneitega luctuosa (Tangled nest spider), this protein is Delta-amaurobitoxin-Pl1c.